We begin with the raw amino-acid sequence, 61 residues long: MAKDFVTGKKTTFGNTRSHALNSSSRSWKPNLQKVRILVNGKPKRVWVSTKTLKSGKVTRV.

The disordered stretch occupies residues 1–27; it reads MAKDFVTGKKTTFGNTRSHALNSSSRS. Positions 9–27 are enriched in polar residues; that stretch reads KKTTFGNTRSHALNSSSRS.

The protein belongs to the bacterial ribosomal protein bL28 family.

The sequence is that of Large ribosomal subunit protein bL28 from Lactobacillus delbrueckii subsp. bulgaricus (strain ATCC 11842 / DSM 20081 / BCRC 10696 / JCM 1002 / NBRC 13953 / NCIMB 11778 / NCTC 12712 / WDCM 00102 / Lb 14).